The chain runs to 112 residues: T cell receptor alpha variable 12-1 (112 aa).

A signal peptide spans 1–20; the sequence is MISLRVLLVILWLQLSWVWS. Residues 23–112 form the Ig-like domain; sequence KEVEQDPGPF…DSATYLCVVN (90 aa). Residue Asn43 is glycosylated (N-linked (GlcNAc...) asparagine). Cys44 and Cys109 are joined by a disulfide.

As to quaternary structure, alpha-beta TR is a heterodimer composed of an alpha and beta chain; disulfide-linked. The alpha-beta TR is associated with the transmembrane signaling CD3 coreceptor proteins to form the TR-CD3 (TcR or TCR). The assembly of alpha-beta TR heterodimers with CD3 occurs in the endoplasmic reticulum where a single alpha-beta TR heterodimer associates with one CD3D-CD3E heterodimer, one CD3G-CD3E heterodimer and one CD247 homodimer forming a stable octameric structure. CD3D-CD3E and CD3G-CD3E heterodimers preferentially associate with TR alpha and TR beta chains, respectively. The association of the CD247 homodimer is the last step of TcR assembly in the endoplasmic reticulum and is required for transport to the cell surface.

It is found in the cell membrane. Its function is as follows. V region of the variable domain of T cell receptor (TR) alpha chain that participates in the antigen recognition. Alpha-beta T cell receptors are antigen specific receptors which are essential to the immune response and are present on the cell surface of T lymphocytes. Recognize peptide-major histocompatibility (MH) (pMH) complexes that are displayed by antigen presenting cells (APC), a prerequisite for efficient T cell adaptive immunity against pathogens. Binding of alpha-beta TR to pMH complex initiates TR-CD3 clustering on the cell surface and intracellular activation of LCK that phosphorylates the ITAM motifs of CD3G, CD3D, CD3E and CD247 enabling the recruitment of ZAP70. In turn ZAP70 phosphorylates LAT, which recruits numerous signaling molecules to form the LAT signalosome. The LAT signalosome propagates signal branching to three major signaling pathways, the calcium, the mitogen-activated protein kinase (MAPK) kinase and the nuclear factor NF-kappa-B (NF-kB) pathways, leading to the mobilization of transcription factors that are critical for gene expression and essential for T cell growth and differentiation. The T cell repertoire is generated in the thymus, by V-(D)-J rearrangement. This repertoire is then shaped by intrathymic selection events to generate a peripheral T cell pool of self-MH restricted, non-autoaggressive T cells. Post-thymic interaction of alpha-beta TR with the pMH complexes shapes TR structural and functional avidity. The protein is T cell receptor alpha variable 12-1 of Homo sapiens (Human).